Reading from the N-terminus, the 102-residue chain is ATP-dependent Clp protease adapter protein ClpS (102 aa).

It belongs to the ClpS family. Binds to the N-terminal domain of the chaperone ClpA.

Its function is as follows. Involved in the modulation of the specificity of the ClpAP-mediated ATP-dependent protein degradation. The sequence is that of ATP-dependent Clp protease adapter protein ClpS from Shewanella woodyi (strain ATCC 51908 / MS32).